Here is a 745-residue protein sequence, read N- to C-terminus: Mediator of RNA polymerase II transcription subunit 25 (745 aa).

The tract at residues 1 to 226 (MVPGSEGPAR…PRHMVLVRGL (226 aa)) is interaction with the Mediator complex. The segment covering 233–243 (SSTSGSLQTKQ) has biased composition (polar residues). 2 disordered regions span residues 233–266 (SSTSGSLQTKQAVPLPPAPASAATLSAAPPQALP) and 299–374 (LGPR…VTPG). Over residues 252-262 (ASAATLSAAPP) the composition is skewed to low complexity. Pro residues predominate over residues 324–342 (PAPPLAPVPPGAPKPPPAS). Positions 389 to 543 (LGGQQSVSNK…VNGIRQVITN (155 aa)) are interaction with VP16. The interval 395 to 545 (VSNKLLAWSG…GIRQVITNHK (151 aa)) is interaction with CREBBP. Interaction with RARA stretches follow at residues 563–652 (APPV…LLNP) and 639–705 (PGAN…WPTQ). The interval 584–738 (LRAPQPQPQG…PGLQPSVMED (155 aa)) is disordered. Residues 596 to 617 (GASAATGQPQPQGATQAPTGAP) are compositionally biased toward low complexity. Residues 618–631 (QGPPGAAPGPPPSG) show a composition bias toward pro residues. The short motif at 645–649 (LRSLL) is the LXXLL motif element. Positions 652-663 (PAPPQTGVPPPQ) are enriched in pro residues. Residue Arg-723 is modified to Asymmetric dimethylarginine.

This sequence belongs to the Mediator complex subunit 25 family. In terms of assembly, component of the Mediator complex, which is composed of MED1, MED4, MED6, MED7, MED8, MED9, MED10, MED11, MED12, MED13, MED13L, MED14, MED15, MED16, MED17, MED18, MED19, MED20, MED21, MED22, MED23, MED24, MED25, MED26, MED27, MED29, MED30, MED31, CCNC, CDK8 and CDC2L6/CDK11. The MED12, MED13, CCNC and CDK8 subunits form a distinct module termed the CDK8 module. Mediator containing the CDK8 module is less active than Mediator lacking this module in supporting transcriptional activation. Individual preparations of the Mediator complex lacking one or more distinct subunits have been variously termed ARC, CRSP, DRIP, PC2, SMCC and TRAP. Interacts with CREBBP. Interacts with ESR1, GR and THRB in a ligand-dependent fashion. Binds the Herpes simplex virus activator VP16. Interacts with RARA and RXRA in a ligand-dependent fashion.

It localises to the nucleus. Its function is as follows. Component of the Mediator complex, a coactivator involved in the regulated transcription of nearly all RNA polymerase II-dependent genes. Mediator functions as a bridge to convey information from gene-specific regulatory proteins to the basal RNA polymerase II transcription machinery. Mediator is recruited to promoters by direct interactions with regulatory proteins and serves as a scaffold for the assembly of a functional preinitiation complex with RNA polymerase II and the general transcription factors. Required for RARA/RXRA-mediated transcription. This Mus musculus (Mouse) protein is Mediator of RNA polymerase II transcription subunit 25 (Med25).